Reading from the N-terminus, the 150-residue chain is uncharacterized protein (150 aa).

Its subcellular location is the plastid. It is found in the chloroplast. This is an uncharacterized protein from Pyropia yezoensis (Susabi-nori).